We begin with the raw amino-acid sequence, 164 residues long: UPF0304 protein YfbU (164 aa).

Belongs to the UPF0304 family.

This chain is UPF0304 protein YfbU, found in Shigella flexneri serotype 5b (strain 8401).